Here is a 440-residue protein sequence, read N- to C-terminus: D-serine dehydratase (440 aa).

N6-(pyridoxal phosphate)lysine is present on lysine 116.

Belongs to the serine/threonine dehydratase family. DsdA subfamily. Monomer. It depends on pyridoxal 5'-phosphate as a cofactor.

It catalyses the reaction D-serine = pyruvate + NH4(+). In Salmonella typhimurium (strain LT2 / SGSC1412 / ATCC 700720), this protein is D-serine dehydratase.